The sequence spans 95 residues: U8-barytoxin-Tl1a (95 aa).

The N-terminal stretch at 1–21 (MKTLVLVAVLGLASLYLLSYA) is a signal peptide. A propeptide spanning residues 22–50 (SEVQQLSVAEEEFGALIDAFGGLLETEER) is cleaved from the precursor. Intrachain disulfides connect Cys57-Cys71, Cys64-Cys76, and Cys70-Cys86.

This sequence belongs to the neurotoxin 10 (Hwtx-1) family. 26 (ICK-1) subfamily. Expressed by the venom gland.

It localises to the secreted. Ion channel inhibitor. In Trittame loki (Brush-footed trapdoor spider), this protein is U8-barytoxin-Tl1a.